The primary structure comprises 434 residues: 3-phosphoshikimate 1-carboxyvinyltransferase (434 aa).

The 3-phosphoshikimate site is built by Lys15, Ser16, and Arg20. A phosphoenolpyruvate-binding site is contributed by Lys15. Phosphoenolpyruvate-binding residues include Gly96 and Arg124. 3-phosphoshikimate contacts are provided by Ser169, Gln171, Ser195, Asp319, and Lys346. Gln171 contributes to the phosphoenolpyruvate binding site. The Proton acceptor role is filled by Asp319. The phosphoenolpyruvate site is built by Arg350 and Arg394.

Belongs to the EPSP synthase family. As to quaternary structure, monomer.

It localises to the cytoplasm. The enzyme catalyses 3-phosphoshikimate + phosphoenolpyruvate = 5-O-(1-carboxyvinyl)-3-phosphoshikimate + phosphate. The protein operates within metabolic intermediate biosynthesis; chorismate biosynthesis; chorismate from D-erythrose 4-phosphate and phosphoenolpyruvate: step 6/7. Functionally, catalyzes the transfer of the enolpyruvyl moiety of phosphoenolpyruvate (PEP) to the 5-hydroxyl of shikimate-3-phosphate (S3P) to produce enolpyruvyl shikimate-3-phosphate and inorganic phosphate. This Chlorobium phaeobacteroides (strain DSM 266 / SMG 266 / 2430) protein is 3-phosphoshikimate 1-carboxyvinyltransferase.